A 542-amino-acid polypeptide reads, in one-letter code: Leucine-rich repeat-containing protein 56 (542 aa).

5 LRR repeats span residues 94–115 (NLDQ…GTSL), 117–138 (HLQV…ASLP), 139–160 (ALKE…CLLE), 161–182 (QLEV…RYLQ), and 186–206 (RLAM…PGPT). One can recognise an LRRCT domain in the interval 207–250 (NKVPRGYNYRAEVRKLIPQLQVLDEVPAAHTGPPAPPRLSQDWL). 3 disordered regions span residues 308–377 (LLSE…ADSS), 396–475 (LPYR…LQSR), and 507–542 (RLSP…PVPT). Over residues 416–426 (RVPEEQVHQAE) the composition is skewed to basic and acidic residues. Over residues 522–532 (PDAAARPPRAA) the composition is skewed to low complexity.

The protein belongs to the LRRC56 family. In terms of assembly, interacts with IFT88.

The protein localises to the cell projection. It localises to the cilium. Its function is as follows. Required for the assembly of dynein arms. The chain is Leucine-rich repeat-containing protein 56 (LRRC56) from Homo sapiens (Human).